A 391-amino-acid polypeptide reads, in one-letter code: MSVALAGSPATNSAQYEPLRVMIVDDSVVIRGLISRWVEAEPDMVVAASLRTGLDAVNQLERVKPDVAVLDIEMPELDGISALPQLLAKKRDLVVIMASTLTRRNAEISFKALSLGAADYIPKPETTREPQAADIFKHDLLQKIRSLGGRVRRRAVPGVAAPAIAREPHPAPLPHPAVATPTVASQAALVKRSFGPTAPRVLLIGSSTGGPQALMSMVADIGPVIDRFPVLITQHMPPTFTTILAEHLARASRRPAHEGIEGEAIKPGNIYLAPGGKHMRVAKQGGNPVIALDDGPPVNFCKPAVDPLFMSAIEVWQGGILAVVLTGMGSDGMRGGKDIVAAGGSVIAQDEASSVVWGMPGAVANAGVCAAVLPLNQIGPKVVRLFAGDRS.

Residues 20 to 138 enclose the Response regulatory domain; that stretch reads RVMIVDDSVV…EPQAADIFKH (119 aa). Residue Asp-71 is modified to 4-aspartylphosphate. Positions 196-383 constitute a CheB-type methylesterase domain; it reads PTAPRVLLIG…PLNQIGPKVV (188 aa). Active-site residues include Ser-207, His-235, and Asp-331.

Belongs to the CheB family. In terms of processing, phosphorylated by CheA. Phosphorylation of the N-terminal regulatory domain activates the methylesterase activity.

It localises to the cytoplasm. The catalysed reaction is [protein]-L-glutamate 5-O-methyl ester + H2O = L-glutamyl-[protein] + methanol + H(+). It carries out the reaction L-glutaminyl-[protein] + H2O = L-glutamyl-[protein] + NH4(+). In terms of biological role, involved in chemotaxis. Part of a chemotaxis signal transduction system that modulates chemotaxis in response to various stimuli. Catalyzes the demethylation of specific methylglutamate residues introduced into the chemoreceptors (methyl-accepting chemotaxis proteins or MCP) by CheR. Also mediates the irreversible deamidation of specific glutamine residues to glutamic acid. This Rhodopseudomonas palustris (strain ATCC BAA-98 / CGA009) protein is Protein-glutamate methylesterase/protein-glutamine glutaminase of group 2 operon.